A 166-amino-acid chain; its full sequence is Calmodulin-like protein 5 (166 aa).

EF-hand domains are found at residues 11 to 46 (EQVA…LGQT), 47 to 82 (PTRE…KASR), 96 to 131 (AADE…LGEK), and 132 to 166 (LTDE…LSDQ). D24, D26, D28, C30, E35, D60, D62, N64, T66, E71, D109, D111, D113, and E120 together coordinate Ca(2+). K131 is subject to N6,N6,N6-trimethyllysine. The Ca(2+) site is built by D145, D147, D149, Q151, and E156.

This sequence belongs to the calmodulin family.

In terms of biological role, potential calcium sensor. The chain is Calmodulin-like protein 5 (CML5) from Oryza sativa subsp. japonica (Rice).